Consider the following 578-residue polypeptide: ATP-dependent RNA helicase dbp3 (578 aa).

Residues 59–69 show a composition bias toward basic and acidic residues; sequence KRSADEEASVK. The segment at 59 to 117 is disordered; the sequence is KRSADEEASVKRKEKKSKHEHKKHKKDKPSADKDRISKKDKKKSKKGKSKTKEESIEIN. Residues 70–85 show a composition bias toward basic residues; the sequence is RKEKKSKHEHKKHKKD. Residues 86–95 are compositionally biased toward basic and acidic residues; it reads KPSADKDRIS. Basic residues predominate over residues 96 to 107; it reads KKDKKKSKKGKS. A Q motif motif is present at residues 167–193; sequence LQFDELDVSAKLREGLKNYKEPTPIQA. In terms of domain architecture, Helicase ATP-binding spans 196 to 373; sequence WPYLLAGRDV…ATFLKDPVKI (178 aa). ATP is bound at residue 209–216; it reads AETGSGKT. A DEAD box motif is present at residues 316 to 319; sequence DEAD. In terms of domain architecture, Helicase C-terminal spans 402 to 550; sequence MLDNLLRKHL…DIPEGLFKFG (149 aa).

The protein belongs to the DEAD box helicase family. DDX5/DBP2 subfamily.

Its subcellular location is the nucleus. The protein localises to the nucleolus. It catalyses the reaction ATP + H2O = ADP + phosphate + H(+). In terms of biological role, ATP-dependent RNA helicase required for 60S ribosomal subunit synthesis. Involved in efficient pre-rRNA processing, predominantly at site A3, which is necessary for the normal formation of 25S and 5.8S rRNAs. This is ATP-dependent RNA helicase dbp3 (dbp3) from Schizosaccharomyces pombe (strain 972 / ATCC 24843) (Fission yeast).